Here is a 212-residue protein sequence, read N- to C-terminus: Glycerol-3-phosphate acyltransferase (212 aa).

The next 4 membrane-spanning stretches (helical) occupy residues 3-23, 78-98, 115-135, and 155-177; these read ILLA…VVVS, DVAV…PVFF, AVHP…AFFF, and FLFG…LLVW.

The protein belongs to the PlsY family. As to quaternary structure, probably interacts with PlsX.

The protein resides in the cell inner membrane. It carries out the reaction an acyl phosphate + sn-glycerol 3-phosphate = a 1-acyl-sn-glycero-3-phosphate + phosphate. Its pathway is lipid metabolism; phospholipid metabolism. Its function is as follows. Catalyzes the transfer of an acyl group from acyl-phosphate (acyl-PO(4)) to glycerol-3-phosphate (G3P) to form lysophosphatidic acid (LPA). This enzyme utilizes acyl-phosphate as fatty acyl donor, but not acyl-CoA or acyl-ACP. The polypeptide is Glycerol-3-phosphate acyltransferase (Burkholderia lata (strain ATCC 17760 / DSM 23089 / LMG 22485 / NCIMB 9086 / R18194 / 383)).